A 433-amino-acid polypeptide reads, in one-letter code: ATP-dependent protease ATPase subunit HslU (433 aa).

Residues valine 18, 60–65 (GVGKTE), aspartate 246, glutamate 311, and arginine 383 each bind ATP.

This sequence belongs to the ClpX chaperone family. HslU subfamily. A double ring-shaped homohexamer of HslV is capped on each side by a ring-shaped HslU homohexamer. The assembly of the HslU/HslV complex is dependent on binding of ATP.

The protein resides in the cytoplasm. ATPase subunit of a proteasome-like degradation complex; this subunit has chaperone activity. The binding of ATP and its subsequent hydrolysis by HslU are essential for unfolding of protein substrates subsequently hydrolyzed by HslV. HslU recognizes the N-terminal part of its protein substrates and unfolds these before they are guided to HslV for hydrolysis. The protein is ATP-dependent protease ATPase subunit HslU of Rhodopseudomonas palustris (strain ATCC BAA-98 / CGA009).